Here is a 425-residue protein sequence, read N- to C-terminus: Serine--tRNA ligase (425 aa).

Position 230–232 (230–232 (TAE)) interacts with L-serine. Residue 261–263 (RSE) participates in ATP binding. Glu284 is an L-serine binding site. 348-351 (EISS) serves as a coordination point for ATP. Ser384 contacts L-serine.

It belongs to the class-II aminoacyl-tRNA synthetase family. Type-1 seryl-tRNA synthetase subfamily. As to quaternary structure, homodimer. The tRNA molecule binds across the dimer.

The protein localises to the cytoplasm. It carries out the reaction tRNA(Ser) + L-serine + ATP = L-seryl-tRNA(Ser) + AMP + diphosphate + H(+). The catalysed reaction is tRNA(Sec) + L-serine + ATP = L-seryl-tRNA(Sec) + AMP + diphosphate + H(+). Its pathway is aminoacyl-tRNA biosynthesis; selenocysteinyl-tRNA(Sec) biosynthesis; L-seryl-tRNA(Sec) from L-serine and tRNA(Sec): step 1/1. Functionally, catalyzes the attachment of serine to tRNA(Ser). Is also able to aminoacylate tRNA(Sec) with serine, to form the misacylated tRNA L-seryl-tRNA(Sec), which will be further converted into selenocysteinyl-tRNA(Sec). The chain is Serine--tRNA ligase from Maridesulfovibrio salexigens (strain ATCC 14822 / DSM 2638 / NCIMB 8403 / VKM B-1763) (Desulfovibrio salexigens).